Here is a 464-residue protein sequence, read N- to C-terminus: ATP synthase subunit beta (464 aa).

153–160 (GGAGVGKT) contacts ATP.

This sequence belongs to the ATPase alpha/beta chains family. In terms of assembly, F-type ATPases have 2 components, CF(1) - the catalytic core - and CF(0) - the membrane proton channel. CF(1) has five subunits: alpha(3), beta(3), gamma(1), delta(1), epsilon(1). CF(0) has three main subunits: a(1), b(2) and c(9-12). The alpha and beta chains form an alternating ring which encloses part of the gamma chain. CF(1) is attached to CF(0) by a central stalk formed by the gamma and epsilon chains, while a peripheral stalk is formed by the delta and b chains.

The protein localises to the cell membrane. The enzyme catalyses ATP + H2O + 4 H(+)(in) = ADP + phosphate + 5 H(+)(out). In terms of biological role, produces ATP from ADP in the presence of a proton gradient across the membrane. The catalytic sites are hosted primarily by the beta subunits. The protein is ATP synthase subunit beta of Acetivibrio thermocellus (strain ATCC 27405 / DSM 1237 / JCM 9322 / NBRC 103400 / NCIMB 10682 / NRRL B-4536 / VPI 7372) (Clostridium thermocellum).